Here is a 431-residue protein sequence, read N- to C-terminus: Mitochondrial inner membrane protein OXA1-like (431 aa).

The N-terminal 22 residues, 1-22 (MATCLRGITKRVNLLQRRVYPS), are a transit peptide targeting the mitochondrion. Helical transmembrane passes span 119-139 (VVPAINEVAIAAADSAFPVAA), 155-175 (WWASIALTTVLIRGVTIPILL), 227-247 (FTPLKGLIIQGPIFISFFFAI), 269-289 (TTTDTTYILPLLTAVTFLIMV), and 312-332 (IIAFLSIPVLIGIEKALFCYW). Residues 362–414 (NSSTRQPSPSSPLPFSFAEPKDQSVVAQEKPPMSSESSSSVPDRRISRSSVLN) are disordered. Low complexity predominate over residues 392-402 (PPMSSESSSSV).

This sequence belongs to the OXA1/ALB3/YidC (TC 2.A.9.2) family.

It localises to the mitochondrion inner membrane. Its function is as follows. Probably required for the insertion of integral membrane proteins into the mitochondrial inner membrane. May participate in the activity and assembly of cytochrome oxidase. This chain is Mitochondrial inner membrane protein OXA1-like (OXA1L), found in Arabidopsis thaliana (Mouse-ear cress).